Consider the following 325-residue polypeptide: MIERIWSGCSLLWVLLLPLSWLYGLISGAIRLSYQLGLRKAWRAPVPVVVVGNLTAGGNGKTPVVVWLVEQLQQRGIRAGVVSRGYGGKAAHYPLVLNDATTPAEAGDEPVLIYQRTGAPVAVSANRAEAVQALMGHATPQIIITDDGLQHYALARDKEIVVVDGVRRFGNGWWLPAGPMRERASRLKQVDAVITNGGEARSGEIAMQLNPGLAVNLRSGEKRPVNTLNNVVAMAGIGHPPRFFATLEKCGLTPVKTVSLADHQALREADVLALLSEGQSLLMTEKDAVKCRAFAHDNWWYLPVDATLAQPQADQLLKDILTLVR.

Residue 55-62 (TAGGNGKT) coordinates ATP.

Belongs to the LpxK family.

The enzyme catalyses a lipid A disaccharide + ATP = a lipid IVA + ADP + H(+). It participates in glycolipid biosynthesis; lipid IV(A) biosynthesis; lipid IV(A) from (3R)-3-hydroxytetradecanoyl-[acyl-carrier-protein] and UDP-N-acetyl-alpha-D-glucosamine: step 6/6. Transfers the gamma-phosphate of ATP to the 4'-position of a tetraacyldisaccharide 1-phosphate intermediate (termed DS-1-P) to form tetraacyldisaccharide 1,4'-bis-phosphate (lipid IVA). The protein is Tetraacyldisaccharide 4'-kinase of Cronobacter sakazakii (strain ATCC BAA-894) (Enterobacter sakazakii).